The sequence spans 68 residues: Large ribosomal subunit protein bL31 (68 aa).

Belongs to the bacterial ribosomal protein bL31 family. Type A subfamily. Part of the 50S ribosomal subunit.

Its function is as follows. Binds the 23S rRNA. The sequence is that of Large ribosomal subunit protein bL31 from Helicobacter hepaticus (strain ATCC 51449 / 3B1).